The primary structure comprises 282 residues: Elongation factor Ts (282 aa).

An involved in Mg(2+) ion dislocation from EF-Tu region spans residues Thr80–Val83.

This sequence belongs to the EF-Ts family.

It localises to the cytoplasm. Associates with the EF-Tu.GDP complex and induces the exchange of GDP to GTP. It remains bound to the aminoacyl-tRNA.EF-Tu.GTP complex up to the GTP hydrolysis stage on the ribosome. This Aliivibrio salmonicida (strain LFI1238) (Vibrio salmonicida (strain LFI1238)) protein is Elongation factor Ts.